Here is a 206-residue protein sequence, read N- to C-terminus: Small ribosomal subunit protein uS4 (206 aa).

Residues 96–161 enclose the S4 RNA-binding domain; it reads RRLDNVVYRM…QGRIQAALAL (66 aa).

This sequence belongs to the universal ribosomal protein uS4 family. As to quaternary structure, part of the 30S ribosomal subunit. Contacts protein S5. The interaction surface between S4 and S5 is involved in control of translational fidelity.

Its function is as follows. One of the primary rRNA binding proteins, it binds directly to 16S rRNA where it nucleates assembly of the body of the 30S subunit. In terms of biological role, with S5 and S12 plays an important role in translational accuracy. This is Small ribosomal subunit protein uS4 from Legionella pneumophila (strain Paris).